The primary structure comprises 324 residues: Galectin-4 (324 aa).

Galectin domains are found at residues 19-150 (YKRP…INFL) and 196-324 (YVGT…YVQI). 257–263 (WGSEERK) contributes to the a beta-D-galactoside binding site. A Phosphoserine modification is found at Ser259.

Monomer. Highly expressed in full-length form in small and large intestine and stomach but was not detected in other tissues including lung, liver, kidney and spleen.

In terms of biological role, galectin that binds lactose and a related range of sugars. The sequence is that of Galectin-4 (Lgals4) from Rattus norvegicus (Rat).